The following is a 149-amino-acid chain: Transcription factor HY5-like (149 aa).

The disordered stretch occupies residues 1–77 (MSLQRPNGNS…RRRGRNPVDK (77 aa)). The interval 23 to 36 (ESDEELLMVPDMEA) is interaction with COP1. Position 24 is a phosphoserine (Ser-24). The span at 55-64 (ELDQTQNGVS) shows a compositional bias: polar residues. A bZIP domain is found at 78–141 (EYRSLKRLLR…TMLRKMLINT (64 aa)). Residues 80-100 (RSLKRLLRNRVSAQQARERKK) form a basic motif region. Residues 106–134 (LESRANELQNNNDQLEEKISTLTNENTML) form a leucine-zipper region.

This sequence belongs to the bZIP family. Heterodimer; heterodimerizes with HY5 via the leucine-zipper domains. Interacts with COP1 WD40 domain. Interacts with BBX24/STO and BBX25/STH. In terms of processing, ubiquitinated by COP1. Ubiquitination takes place in darkness and leads to its subsequent degradation, thereby preventing the activation of photomorphogenesis signals.

The protein localises to the nucleus. Functionally, transcription factor that promotes photomorphogenesis in light. Acts downstream of the light receptor network and directly affects transcription of light-induced genes. Specifically involved in the blue light specific pathway, suggesting that it participates in transmission of cryptochromes (CRY1 and CRY2) signals to downstream responses. In darkness, its degradation prevents the activation of light-induced genes. The protein is Transcription factor HY5-like (HYH) of Arabidopsis thaliana (Mouse-ear cress).